The primary structure comprises 131 residues: Fluoride-specific ion channel FluC (131 aa).

3 helical membrane-spanning segments follow: residues 3–23, 34–54, and 62–82; these read AAAN…GAWL, IFLT…LLMG, and AVPA…LGGL. Positions 80 and 83 each coordinate Na(+). A helical transmembrane segment spans residues 101-121; sequence WGWLALHAAVHVAGSLLMAWI.

It belongs to the fluoride channel Fluc/FEX (TC 1.A.43) family.

It is found in the cell inner membrane. It carries out the reaction fluoride(in) = fluoride(out). Na(+) is not transported, but it plays an essential structural role and its presence is essential for fluoride channel function. Fluoride-specific ion channel. Important for reducing fluoride concentration in the cell, thus reducing its toxicity. This chain is Fluoride-specific ion channel FluC, found in Aromatoleum aromaticum (strain DSM 19018 / LMG 30748 / EbN1) (Azoarcus sp. (strain EbN1)).